A 1132-amino-acid polypeptide reads, in one-letter code: Error-prone DNA polymerase (1132 aa).

It belongs to the DNA polymerase type-C family. DnaE2 subfamily.

The protein localises to the cytoplasm. The enzyme catalyses DNA(n) + a 2'-deoxyribonucleoside 5'-triphosphate = DNA(n+1) + diphosphate. Its function is as follows. DNA polymerase involved in damage-induced mutagenesis and translesion synthesis (TLS). It is not the major replicative DNA polymerase. This is Error-prone DNA polymerase from Anaeromyxobacter dehalogenans (strain 2CP-C).